The following is a 185-amino-acid chain: Ribosome-recycling factor (185 aa).

This sequence belongs to the RRF family.

Its subcellular location is the cytoplasm. Its function is as follows. Responsible for the release of ribosomes from messenger RNA at the termination of protein biosynthesis. May increase the efficiency of translation by recycling ribosomes from one round of translation to another. The polypeptide is Ribosome-recycling factor (Azoarcus sp. (strain BH72)).